We begin with the raw amino-acid sequence, 563 residues long: MDFKQQVVTALTGVLGDSLPAEKVAQLIETPKTSDLGDYAFPTFILAKTLRKAPQQIAQDLVDQMDVAGFEKVIANGPYINFFLDKAAFSDQILKTVLTEAAKYGESDLGHGGNVPIDMSSPNIAKPISMGHLRSTVIGNSIAKILTKVGFNPIKINHLGDWGTQFGKLIVAYKKWGSEEEVKEDPITNLLKYYVKFHQEDVEHPELDDEARAWFRKLEAGDEEATQLWSWFRSESLKEFQKIYDMLGVEFDSYNGEAFYNDKMDAVVEAIESKGLLQESRGAEIVDLTAYNLNPALIKKSDGATLYMTRDLAAAMYRHDTYNFVQSLYVVGGEQREHFNQLKAVLKEMGNDWSDEIHHIPFGLITQGGKKLSTRSGRVILLEEVLNDAVKLAGAQIEAKNPDLPNREEVAKQVGIGAVIFHDLKNDRLDNFDFDLEEVVRFEGETGPYVQYTNARAQSILRKANQEVVVDDQLVVADDNAWDVLKMLSNFPAVIARASKEYEPSIVAKYALRLAKAFNKYYANSKILADDDQRNARLSLVKSVSIVLETALDLLGVQAPKEM.

The 'HIGH' region signature appears at 122–132 (PNIAKPISMGH).

This sequence belongs to the class-I aminoacyl-tRNA synthetase family. As to quaternary structure, monomer.

It is found in the cytoplasm. It catalyses the reaction tRNA(Arg) + L-arginine + ATP = L-arginyl-tRNA(Arg) + AMP + diphosphate. The protein is Arginine--tRNA ligase of Latilactobacillus sakei subsp. sakei (strain 23K) (Lactobacillus sakei subsp. sakei).